The sequence spans 272 residues: Phosphonates import ATP-binding protein PhnC (272 aa).

In terms of domain architecture, ABC transporter spans 2–246 (LELQRLTKTY…VLATIYGAED (245 aa)). ATP is bound at residue 35–42 (GPSGAGKS). Positions 248 to 272 (ASSGREPAPEREPEDTERHLAEVGR) are disordered. Basic and acidic residues predominate over residues 254 to 272 (PAPEREPEDTERHLAEVGR).

Belongs to the ABC transporter superfamily. Phosphonates importer (TC 3.A.1.9.1) family. In terms of assembly, the complex is composed of two ATP-binding proteins (PhnC), two transmembrane proteins (PhnE) and a solute-binding protein (PhnD).

The protein localises to the cell inner membrane. The enzyme catalyses phosphonate(out) + ATP + H2O = phosphonate(in) + ADP + phosphate + H(+). Functionally, part of the ABC transporter complex PhnCDE involved in phosphonates import. Responsible for energy coupling to the transport system. The sequence is that of Phosphonates import ATP-binding protein PhnC from Chromohalobacter salexigens (strain ATCC BAA-138 / DSM 3043 / CIP 106854 / NCIMB 13768 / 1H11).